We begin with the raw amino-acid sequence, 486 residues long: NGFI-A-binding protein 1 (486 aa).

The NCD1 stretch occupies residues 4 to 82 (ALPRTLGELQ…RDWVTNPGLF (79 aa)). Residues K126, K129, and K143 each participate in a glycyl lysine isopeptide (Lys-Gly) (interchain with G-Cter in SUMO2) cross-link. A disordered region spans residues 160 to 187 (WQGHHATESEHSLSPADLGSPASPKESS). A phosphoserine mark is found at S171 and S182. K211 participates in a covalent cross-link: Glycyl lysine isopeptide (Lys-Gly) (interchain with G-Cter in SUMO2). The interval 220–309 (LLKNNKKLAK…ARQVSREVTY (90 aa)) is NCD2. The tract at residues 306–337 (EVTYKYTYRTTRLKCGERDELSPKRIKIEDGF) is necessary for nuclear localization. The residue at position 327 (S327) is a Phosphoserine. Residue K332 forms a Glycyl lysine isopeptide (Lys-Gly) (interchain with G-Cter in SUMO1); alternate linkage. A Glycyl lysine isopeptide (Lys-Gly) (interchain with G-Cter in SUMO2); alternate cross-link involves residue K332. Residues K354, K368, and K372 each participate in a glycyl lysine isopeptide (Lys-Gly) (interchain with G-Cter in SUMO2) cross-link. Residues 398-438 (RQSSGEQSPDGGLPSDSSDGQGERPLNLRIPSVQNRQPHHF) are disordered. A compositionally biased stretch (low complexity) spans 404–417 (QSPDGGLPSDSSDG). Position 405 is a phosphoserine (S405). Glycyl lysine isopeptide (Lys-Gly) (interchain with G-Cter in SUMO2) cross-links involve residues K453, K464, and K476. K479 participates in a covalent cross-link: Glycyl lysine isopeptide (Lys-Gly) (interchain with G-Cter in SUMO1); alternate. K479 is covalently cross-linked (Glycyl lysine isopeptide (Lys-Gly) (interchain with G-Cter in SUMO2); alternate).

The protein belongs to the NAB family. Homomultimers may associate with EGR1 bound to DNA. Widely expressed in adult. In day 16 embryo highest levels in forebrain, thymus, salivary gland and cartilage.

It localises to the nucleus. Acts as a transcriptional repressor for zinc finger transcription factors EGR1 and EGR2. This Mus musculus (Mouse) protein is NGFI-A-binding protein 1 (Nab1).